The following is a 91-amino-acid chain: MEIFNDLSRKLVFPIDYPSQRRVAKLTDIILGSGTLVSCLLGFYAGSLSLTLYAFAAAYGLALLLVVPAYGKYRQQKLAWVGSAAATTKDL.

The Cytoplasmic portion of the chain corresponds to 1–28 (MEIFNDLSRKLVFPIDYPSQRRVAKLTD). The helical transmembrane segment at 29–48 (IILGSGTLVSCLLGFYAGSL) threads the bilayer. Residues 49-51 (SLT) are Lumenal-facing. The helical transmembrane segment at 52 to 71 (LYAFAAAYGLALLLVVPAYG) threads the bilayer. Residues 72-91 (KYRQQKLAWVGSAAATTKDL) are Cytoplasmic-facing.

This sequence belongs to the SPCS1 family. Component of the signal peptidase complex (SPC) composed of a catalytic subunit SEC11 and three accessory subunits SPC1, SPC2 and SPC3. The complex induces a local thinning of the ER membrane which is used to measure the length of the signal peptide (SP) h-region of protein substrates. This ensures the selectivity of the complex towards h-regions shorter than 18-20 amino acids. SPC associates with the translocon complex.

Its subcellular location is the endoplasmic reticulum membrane. Its function is as follows. Component of the signal peptidase complex (SPC) which catalyzes the cleavage of N-terminal signal sequences from nascent proteins as they are translocated into the lumen of the endoplasmic reticulum. Dispensable for SPC enzymatic activity. The protein is Signal peptidase complex subunit 1 (SPC1) of Eremothecium gossypii (strain ATCC 10895 / CBS 109.51 / FGSC 9923 / NRRL Y-1056) (Yeast).